The following is a 469-amino-acid chain: UDP-N-acetylmuramate--L-alanine ligase (469 aa).

113–119 is a binding site for ATP; the sequence is GTHGKTT.

Belongs to the MurCDEF family.

It localises to the cytoplasm. It carries out the reaction UDP-N-acetyl-alpha-D-muramate + L-alanine + ATP = UDP-N-acetyl-alpha-D-muramoyl-L-alanine + ADP + phosphate + H(+). It functions in the pathway cell wall biogenesis; peptidoglycan biosynthesis. Its function is as follows. Cell wall formation. In Neisseria gonorrhoeae (strain ATCC 700825 / FA 1090), this protein is UDP-N-acetylmuramate--L-alanine ligase.